The primary structure comprises 424 residues: Glutamyl-tRNA reductase (424 aa).

Residues 51–54 (TCNR), Ser99, 104–106 (EDQ), and Gln110 contribute to the substrate site. Cys52 functions as the Nucleophile in the catalytic mechanism. NADP(+) is bound at residue 179 to 184 (GGGEMG).

It belongs to the glutamyl-tRNA reductase family. As to quaternary structure, homodimer.

The enzyme catalyses (S)-4-amino-5-oxopentanoate + tRNA(Glu) + NADP(+) = L-glutamyl-tRNA(Glu) + NADPH + H(+). The protein operates within porphyrin-containing compound metabolism; protoporphyrin-IX biosynthesis; 5-aminolevulinate from L-glutamyl-tRNA(Glu): step 1/2. In terms of biological role, catalyzes the NADPH-dependent reduction of glutamyl-tRNA(Glu) to glutamate 1-semialdehyde (GSA). The polypeptide is Glutamyl-tRNA reductase (Methanocorpusculum labreanum (strain ATCC 43576 / DSM 4855 / Z)).